A 750-amino-acid polypeptide reads, in one-letter code: Methylmalonyl-CoA mutase, mitochondrial (750 aa).

The transit peptide at 1 to 32 directs the protein to the mitochondrion; it reads MLRAKNQLFLLSPHYLRQVKESSGSRLIQQRL. Gln50 lines the malonyl-CoA pocket. An N6-acetyllysine modification is found at Lys89. Malonyl-CoA-binding positions include 96-99 and 106-110; these read YPTM and TIRQY. The residue at position 212 (Lys212) is an N6-acetyllysine. Residues 216 to 218, Arg228, Lys255, His265, and 304 to 306 each bind malonyl-CoA; these read TIQ and RLS. Position 335 is an N6-acetyllysine (Lys335). Lys343 carries the post-translational modification N6-succinyllysine. Ser481 bears the Phosphoserine mark. An N6-succinyllysine modification is found at Lys595. Lys602 bears the N6-acetyllysine mark. The region spanning 614 to 746 is the B12-binding domain; that stretch reads RPRLLVAKMG…DDIEKCLEKK (133 aa). His627 lines the adenosylcob(III)alamin pocket.

The protein belongs to the methylmalonyl-CoA mutase family. As to quaternary structure, homodimer. Interacts (the apoenzyme form) with MMAA; the interaction is GTP dependent. The cofactor is adenosylcob(III)alamin.

Its subcellular location is the mitochondrion matrix. It is found in the mitochondrion. It localises to the cytoplasm. The catalysed reaction is (R)-methylmalonyl-CoA = succinyl-CoA. Its activity is regulated as follows. During catalysis, accumulation of oxidized inactive cofactor hydroxocobalamin (OH2Cbl) leads to loss of MMUT activity. Interaction with MMAA decreases the rate of OH2Cbl formation and promotes the replacement of OH2Cbl by the active cofactor adenosylcobalamin (AdoCbl), thereby restoring MMUT activity. Inhibited by itaconyl-CoA, a metabolite that inactivates the coenzyme B12 cofactor. Inhibited at high concentration of substrate. Functionally, catalyzes the reversible isomerization of methylmalonyl-CoA (MMCoA) (generated from branched-chain amino acid metabolism and degradation of dietary odd chain fatty acids and cholesterol) to succinyl-CoA (3-carboxypropionyl-CoA), a key intermediate of the tricarboxylic acid cycle. This Homo sapiens (Human) protein is Methylmalonyl-CoA mutase, mitochondrial.